The sequence spans 225 residues: Phosphatidylserine decarboxylase proenzyme (225 aa).

The Schiff-base intermediate with substrate; via pyruvic acid role is filled by Ser195. Ser195 carries the pyruvic acid (Ser); by autocatalysis modification.

This sequence belongs to the phosphatidylserine decarboxylase family. PSD-A subfamily. In terms of assembly, heterodimer of a large membrane-associated beta subunit and a small pyruvoyl-containing alpha subunit. Pyruvate serves as cofactor. Is synthesized initially as an inactive proenzyme. Formation of the active enzyme involves a self-maturation process in which the active site pyruvoyl group is generated from an internal serine residue via an autocatalytic post-translational modification. Two non-identical subunits are generated from the proenzyme in this reaction, and the pyruvate is formed at the N-terminus of the alpha chain, which is derived from the carboxyl end of the proenzyme. The post-translation cleavage follows an unusual pathway, termed non-hydrolytic serinolysis, in which the side chain hydroxyl group of the serine supplies its oxygen atom to form the C-terminus of the beta chain, while the remainder of the serine residue undergoes an oxidative deamination to produce ammonia and the pyruvoyl prosthetic group on the alpha chain.

Its subcellular location is the cell membrane. It catalyses the reaction a 1,2-diacyl-sn-glycero-3-phospho-L-serine + H(+) = a 1,2-diacyl-sn-glycero-3-phosphoethanolamine + CO2. It functions in the pathway phospholipid metabolism; phosphatidylethanolamine biosynthesis; phosphatidylethanolamine from CDP-diacylglycerol: step 2/2. In terms of biological role, catalyzes the formation of phosphatidylethanolamine (PtdEtn) from phosphatidylserine (PtdSer). In Gluconobacter oxydans (strain 621H) (Gluconobacter suboxydans), this protein is Phosphatidylserine decarboxylase proenzyme.